A 363-amino-acid polypeptide reads, in one-letter code: Tetraacyldisaccharide 4'-kinase (363 aa).

62 to 69 (RVGGTGKT) serves as a coordination point for ATP.

It belongs to the LpxK family.

The enzyme catalyses a lipid A disaccharide + ATP = a lipid IVA + ADP + H(+). The protein operates within glycolipid biosynthesis; lipid IV(A) biosynthesis; lipid IV(A) from (3R)-3-hydroxytetradecanoyl-[acyl-carrier-protein] and UDP-N-acetyl-alpha-D-glucosamine: step 6/6. Transfers the gamma-phosphate of ATP to the 4'-position of a tetraacyldisaccharide 1-phosphate intermediate (termed DS-1-P) to form tetraacyldisaccharide 1,4'-bis-phosphate (lipid IVA). The protein is Tetraacyldisaccharide 4'-kinase of Polynucleobacter asymbioticus (strain DSM 18221 / CIP 109841 / QLW-P1DMWA-1) (Polynucleobacter necessarius subsp. asymbioticus).